Here is a 148-residue protein sequence, read N- to C-terminus: PTS system fructose-like EIIA component (148 aa).

The PTS EIIA type-2 domain occupies 2–145 (AALTASCIDL…DQVLALLNQT (144 aa)). The active-site Tele-phosphohistidine intermediate is His-64. His-64 carries the phosphohistidine; by HPr modification.

The protein resides in the cytoplasm. Its function is as follows. The phosphoenolpyruvate-dependent sugar phosphotransferase system (sugar PTS), a major carbohydrate active transport system, catalyzes the phosphorylation of incoming sugar substrates concomitantly with their translocation across the cell membrane. The enzyme II FrvAB PTS system is involved in fructose transport. This Escherichia coli (strain K12) protein is PTS system fructose-like EIIA component.